The sequence spans 138 residues: Nanos homolog 2 (138 aa).

Residues 31-55 (ETQEIEEPSPGPPLGQDQGLGAPGA) form a disordered region. Residues 62-116 (LCNFCKHNGESRHVYSSHQLKTPDGVVVCPILRHYVCPVCGATGDQAHTLKYCPL) form a Nanos-type zinc finger. Zn(2+) is bound by residues Cys63, Cys66, His79, Cys90, Cys98, Cys101, His109, and Cys114. 2 short sequence motifs (C2HC) span residues 63 to 90 (CNFCKHNGESRHVYSSHQLKTPDGVVVC) and 98 to 114 (CPVCGATGDQAHTLKYC).

Belongs to the nanos family. In terms of assembly, interacts with CNOT1, CNOT3, CNOT6L, CNOT7 and CNOT9. As to expression, testis and ovary. Expression found in several spermatogenic stages: in cells on the periphery of the tubules which could correspond to spermatogonia, in spermatocytes and in round spermatids (at protein level).

The protein resides in the cytoplasm. The protein localises to the P-body. It localises to the perinuclear region. Its function is as follows. Plays a key role in the sexual differentiation of germ cells by promoting the male fate but suppressing the female fate. Represses the female fate pathways by suppressing meiosis, which in turn results in the promotion of the male fate. Maintains the suppression of meiosis by preventing STRA8 expression, which is required for premeiotic DNA replication, after CYP26B1 is decreased. Regulates the localization of the CCR4-NOT deadenylation complex to P-bodies and plays a role in recruiting the complex to trigger the degradation of mRNAs involved in meiosis. Required for the maintenance of the spermatogonial stem cell population. Not essential for the assembly of P-bodies but is required for the maintenance of their normal state. This Homo sapiens (Human) protein is Nanos homolog 2 (NANOS2).